Consider the following 232-residue polypeptide: Ribosomal RNA small subunit methyltransferase G (232 aa).

Positions 1–24 are disordered; that stretch reads MVDTALHPIPGRRTPPHPRSTLPL. S-adenosyl-L-methionine is bound by residues Gly-91, Leu-96, 142-143, and Arg-160; that span reads AE.

Belongs to the methyltransferase superfamily. RNA methyltransferase RsmG family.

The protein resides in the cytoplasm. Specifically methylates the N7 position of guanine in position 518 of 16S rRNA. In Corynebacterium efficiens (strain DSM 44549 / YS-314 / AJ 12310 / JCM 11189 / NBRC 100395), this protein is Ribosomal RNA small subunit methyltransferase G.